The chain runs to 362 residues: Methionine import ATP-binding protein MetN (362 aa).

Residues 2–241 (IHIENLSKTY…PRHEVTRAMV (240 aa)) enclose the ABC transporter domain. 38 to 45 (GPSGAGKS) serves as a coordination point for ATP.

It belongs to the ABC transporter superfamily. Methionine importer (TC 3.A.1.24) family. The complex is composed of two ATP-binding proteins (MetN), two transmembrane proteins (MetI) and a solute-binding protein (MetQ).

The protein resides in the cell inner membrane. It catalyses the reaction L-methionine(out) + ATP + H2O = L-methionine(in) + ADP + phosphate + H(+). The catalysed reaction is D-methionine(out) + ATP + H2O = D-methionine(in) + ADP + phosphate + H(+). Functionally, part of the ABC transporter complex MetNIQ involved in methionine import. Responsible for energy coupling to the transport system. This Bordetella bronchiseptica (strain ATCC BAA-588 / NCTC 13252 / RB50) (Alcaligenes bronchisepticus) protein is Methionine import ATP-binding protein MetN.